We begin with the raw amino-acid sequence, 438 residues long: MSPFLGGWLFFCMLLPFSPGVQGAQEYPHVTPEQIHLSYLGEPGTMTVTWTTWAPARSEVQFGSQLSGPLPFRAHGTARAFVDGGVLRRKLYIHRVTLRKLQPGAQYVYRCGSSQGWSRRFRFTALKNGVHWSPRLAVFGDMGADNPKALPRLRRDTQQGMFDAVLHVGDFAYNMDQDNARVGDRFMRLIEPVAASLPYMTCPGNHEQRYNFSNYKARFSMPGDNEGLWYSWDLGPAHIISFSTEVYFFLHYGRHLIEKQFRWLENDLQKANKNRVARPWIITMGHRPMYCSNADLDDCTRHESRVRKGLHGKLFGLEDLFHKYGVDLEFWAHEHSYERLWPIYNYQVFNGSLESPYTNPRGPVHIITGSAGCEELLTPFVRKPRPWSAVRVKEYGYTRMHILNGTHMHIQQVSDDQDGKIVDDVWVVRPLLGRMMYH.

The first 23 residues, methionine 1–glycine 23, serve as a signal peptide directing secretion. Fe cation contacts are provided by aspartate 141, aspartate 170, and tyrosine 173. Aspartate 170 contributes to the Zn(2+) binding site. Asparagine 205 serves as a coordination point for Zn(2+). A glycan (N-linked (GlcNAc...) asparagine) is linked at asparagine 211. Residues histidine 286 and histidine 333 each contribute to the Zn(2+) site. Histidine 335 lines the Fe cation pocket. N-linked (GlcNAc...) asparagine glycosylation is found at asparagine 350 and asparagine 404.

Belongs to the metallophosphoesterase superfamily. Purple acid phosphatase family. Fe cation serves as cofactor. Zn(2+) is required as a cofactor.

The protein localises to the secreted. The catalysed reaction is a phosphate monoester + H2O = an alcohol + phosphate. The sequence is that of Acid phosphatase type 7 from Mus musculus (Mouse).